The chain runs to 498 residues: Glutamyl-tRNA(Gln) amidotransferase subunit A (498 aa).

Residues Lys-79 and Ser-154 each act as charge relay system in the active site. Ser-178 acts as the Acyl-ester intermediate in catalysis.

It belongs to the amidase family. GatA subfamily. Heterotrimer of A, B and C subunits.

It carries out the reaction L-glutamyl-tRNA(Gln) + L-glutamine + ATP + H2O = L-glutaminyl-tRNA(Gln) + L-glutamate + ADP + phosphate + H(+). Functionally, allows the formation of correctly charged Gln-tRNA(Gln) through the transamidation of misacylated Glu-tRNA(Gln) in organisms which lack glutaminyl-tRNA synthetase. The reaction takes place in the presence of glutamine and ATP through an activated gamma-phospho-Glu-tRNA(Gln). The protein is Glutamyl-tRNA(Gln) amidotransferase subunit A of Psychrobacter cryohalolentis (strain ATCC BAA-1226 / DSM 17306 / VKM B-2378 / K5).